A 149-amino-acid chain; its full sequence is Transcriptional repressor NrdR (149 aa).

Residues 3–34 (CPFCTAKDTKVIDSRLVGGGHQVRRRRECNDC) fold into a zinc finger. The 91-residue stretch at 49 to 139 (PRVIKQDGSR…VYRSFEDIRE (91 aa)) folds into the ATP-cone domain.

Belongs to the NrdR family. It depends on Zn(2+) as a cofactor.

Functionally, negatively regulates transcription of bacterial ribonucleotide reductase nrd genes and operons by binding to NrdR-boxes. The protein is Transcriptional repressor NrdR of Pseudoalteromonas translucida (strain TAC 125).